We begin with the raw amino-acid sequence, 528 residues long: Probable rhamnogalacturonate lyase A (528 aa).

An N-terminal signal peptide occupies residues Met-1–Ala-20. Residue Asn-46 is glycosylated (N-linked (GlcNAc...) asparagine). 2 cysteine pairs are disulfide-bonded: Cys-50–Cys-93 and Cys-184–Cys-193. Asn-351 carries N-linked (GlcNAc...) asparagine glycosylation.

Belongs to the polysaccharide lyase 4 family.

Its subcellular location is the secreted. It catalyses the reaction Endotype eliminative cleavage of L-alpha-rhamnopyranosyl-(1-&gt;4)-alpha-D-galactopyranosyluronic acid bonds of rhamnogalacturonan I domains in ramified hairy regions of pectin leaving L-rhamnopyranose at the reducing end and 4-deoxy-4,5-unsaturated D-galactopyranosyluronic acid at the non-reducing end.. Its function is as follows. Pectinolytic enzymes consist of four classes of enzymes: pectin lyase, polygalacturonase, pectin methylesterase and rhamnogalacturonase. Degrades the rhamnogalacturonan I (RG-I) backbone of pectin. The chain is Probable rhamnogalacturonate lyase A (rglA) from Neosartorya fischeri (strain ATCC 1020 / DSM 3700 / CBS 544.65 / FGSC A1164 / JCM 1740 / NRRL 181 / WB 181) (Aspergillus fischerianus).